The primary structure comprises 239 residues: Ubiquinone biosynthesis O-methyltransferase (239 aa).

Residues arginine 44, glycine 63, aspartate 84, and methionine 128 each contribute to the S-adenosyl-L-methionine site.

It belongs to the methyltransferase superfamily. UbiG/COQ3 family.

It catalyses the reaction a 3-demethylubiquinol + S-adenosyl-L-methionine = a ubiquinol + S-adenosyl-L-homocysteine + H(+). The enzyme catalyses a 3-(all-trans-polyprenyl)benzene-1,2-diol + S-adenosyl-L-methionine = a 2-methoxy-6-(all-trans-polyprenyl)phenol + S-adenosyl-L-homocysteine + H(+). It participates in cofactor biosynthesis; ubiquinone biosynthesis. Functionally, O-methyltransferase that catalyzes the 2 O-methylation steps in the ubiquinone biosynthetic pathway. The polypeptide is Ubiquinone biosynthesis O-methyltransferase (Xanthomonas oryzae pv. oryzae (strain MAFF 311018)).